Reading from the N-terminus, the 407-residue chain is Nicotinate phosphoribosyltransferase (407 aa).

The residue at position 224 (histidine 224) is a Phosphohistidine; by autocatalysis.

This sequence belongs to the NAPRTase family. Post-translationally, transiently phosphorylated on a His residue during the reaction cycle. Phosphorylation strongly increases the affinity for substrates and increases the rate of nicotinate D-ribonucleotide production. Dephosphorylation regenerates the low-affinity form of the enzyme, leading to product release.

It carries out the reaction nicotinate + 5-phospho-alpha-D-ribose 1-diphosphate + ATP + H2O = nicotinate beta-D-ribonucleotide + ADP + phosphate + diphosphate. The protein operates within cofactor biosynthesis; NAD(+) biosynthesis; nicotinate D-ribonucleotide from nicotinate: step 1/1. Functionally, catalyzes the synthesis of beta-nicotinate D-ribonucleotide from nicotinate and 5-phospho-D-ribose 1-phosphate at the expense of ATP. The protein is Nicotinate phosphoribosyltransferase of Pseudomonas syringae pv. tomato (strain ATCC BAA-871 / DC3000).